We begin with the raw amino-acid sequence, 108 residues long: Class I hydrophobin eas (108 aa).

The first 26 residues, 1-26, serve as a signal peptide directing secretion; that stretch reads MQFTSVFTILAIAMTAAAAPAEVVPR. Intrachain disulfides connect cysteine 35/cysteine 86, cysteine 44/cysteine 80, cysteine 45/cysteine 71, and cysteine 87/cysteine 106.

Belongs to the fungal hydrophobin family. Self-assembles to form functional amyloid fibrils called rodlets. Self-assembly into fibrillar rodlets occurs spontaneously at hydrophobic:hydrophilic interfaces and the rodlets further associate laterally to form amphipathic monolayers.

The protein localises to the secreted. Its subcellular location is the spore wall. Its function is as follows. Aerial growth, conidiation, and dispersal of filamentous fungi in the environment rely upon a capability of their secreting small amphipathic proteins called hydrophobins (HPBs) with low sequence identity. Class I can self-assemble into an outermost layer of rodlet bundles on aerial cell surfaces, conferring cellular hydrophobicity that supports fungal growth, development and dispersal; whereas class II form highly ordered films at water-air interfaces through intermolecular interactions but contribute nothing to the rodlet structure. Eas is a class I hydrophobin that forms functional amyloid fibrils called rodlets that facilitate spore formation and dispersal. This chain is Class I hydrophobin eas, found in Neurospora crassa (strain ATCC 24698 / 74-OR23-1A / CBS 708.71 / DSM 1257 / FGSC 987).